The following is a 163-amino-acid chain: NADH-quinone oxidoreductase subunit I (163 aa).

2 consecutive 4Fe-4S ferredoxin-type domains span residues 53 to 83 and 94 to 123; these read LRRYPNGEERCIACKLCEAICPAQAITIEAG and VRYDIDMVKCIYCGFCQEACPVDAIVEGPN. 8 residues coordinate [4Fe-4S] cluster: Cys63, Cys66, Cys69, Cys73, Cys103, Cys106, Cys109, and Cys113.

This sequence belongs to the complex I 23 kDa subunit family. In terms of assembly, NDH-1 is composed of 14 different subunits. Subunits NuoA, H, J, K, L, M, N constitute the membrane sector of the complex. [4Fe-4S] cluster is required as a cofactor.

It localises to the cell inner membrane. The catalysed reaction is a quinone + NADH + 5 H(+)(in) = a quinol + NAD(+) + 4 H(+)(out). In terms of biological role, NDH-1 shuttles electrons from NADH, via FMN and iron-sulfur (Fe-S) centers, to quinones in the respiratory chain. The immediate electron acceptor for the enzyme in this species is believed to be ubiquinone. Couples the redox reaction to proton translocation (for every two electrons transferred, four hydrogen ions are translocated across the cytoplasmic membrane), and thus conserves the redox energy in a proton gradient. This is NADH-quinone oxidoreductase subunit I from Brucella canis (strain ATCC 23365 / NCTC 10854 / RM-666).